The sequence spans 1017 residues: Rho-GTPase-activating protein LRG1 (1017 aa).

Met-1 is subject to N-acetylmethionine. 2 consecutive LIM zinc-binding domains span residues 28–88 (CARC…LCQY) and 98–148 (CHVC…CKYH). Positions 155-184 (KRCKGCEFPISDQYIEFPKGEEIHCWHPEC) constitute an LIM zinc-binding 3; truncated domain. Residues 419-474 (CAGCNKYIQEECIQFYEHRWHIACFTCSSCHKNINPRSLTDPTFNKEKKKILCSHC) form the LIM zinc-binding 4 domain. Ser-562 is subject to Phosphoserine. Residues 570–602 (TDLNDPTKQGDSKNLVIQTDDPSSSQQVSTREN) form a disordered region. Polar residues predominate over residues 584–602 (LVIQTDDPSSSQQVSTREN). Positions 730–953 (APLDVLCEKW…YLITHNEEMA (224 aa)) constitute a Rho-GAP domain.

As to quaternary structure, interacts with CDC42, RHO1 and RHO2.

The protein resides in the cytoplasm. It localises to the bud. It is found in the bud neck. Its function is as follows. Acts in signal transduction. Activates CDC42, RHO1 and RHO2. Negatively regulates 1,3-beta-glucan synthesis. May be responsible for the down-regulation of CDC42 during mating. This chain is Rho-GTPase-activating protein LRG1 (LRG1), found in Saccharomyces cerevisiae (strain ATCC 204508 / S288c) (Baker's yeast).